We begin with the raw amino-acid sequence, 351 residues long: Fe(3+) ions import ATP-binding protein FbpC (351 aa).

Residues 7–237 (VVLKNVCKRF…PSSMFMANFM (231 aa)) form the ABC transporter domain. 39–46 (GPSGCGKT) lines the ATP pocket.

It belongs to the ABC transporter superfamily. Fe(3+) ion importer (TC 3.A.1.10) family. The complex is composed of two ATP-binding proteins (FbpC), two transmembrane proteins (FbpB) and a solute-binding protein (FbpA).

The protein resides in the cell inner membrane. It carries out the reaction Fe(3+)(out) + ATP + H2O = Fe(3+)(in) + ADP + phosphate + H(+). Functionally, part of the ABC transporter complex FbpABC involved in Fe(3+) ions import. Responsible for energy coupling to the transport system. The sequence is that of Fe(3+) ions import ATP-binding protein FbpC from Photobacterium profundum (strain SS9).